The sequence spans 145 residues: Phospholipase A2 (145 aa).

Residues 1–15 (MRLLVLAALLTVGAG) form the signal peptide. Glutamine 16 carries the pyrrolidone carboxylic acid modification. Positions 16-22 (QAGLNSR) are cleaved as a propeptide — removed by trypsin. 7 disulfide bridges follow: cysteine 33/cysteine 99, cysteine 49/cysteine 145, cysteine 51/cysteine 67, cysteine 66/cysteine 127, cysteine 73/cysteine 120, cysteine 83/cysteine 113, and cysteine 106/cysteine 118. Positions 50, 52, and 54 each coordinate Ca(2+). The active site involves histidine 70. Aspartate 71 provides a ligand contact to Ca(2+). Aspartate 121 is a catalytic residue.

Belongs to the phospholipase A2 family. In terms of assembly, monomer or homodimer. The cofactor is Ca(2+). Post-translationally, activated by trypsin cleavage in the duodenum. Can also be activated by thrombin or autocatalytically.

It is found in the secreted. It carries out the reaction a 1,2-diacyl-sn-glycero-3-phosphocholine + H2O = a 1-acyl-sn-glycero-3-phosphocholine + a fatty acid + H(+). It catalyses the reaction 1,2-ditetradecanoyl-sn-glycero-3-phosphocholine + H2O = 1-tetradecanoyl-sn-glycero-3-phosphocholine + tetradecanoate + H(+). The enzyme catalyses 1,2-dihexadecanoyl-sn-glycero-3-phosphocholine + H2O = 1-hexadecanoyl-sn-glycero-3-phosphocholine + hexadecanoate + H(+). The catalysed reaction is 1-hexadecanoyl-2-(9Z-octadecenoyl)-sn-glycero-3-phosphocholine + H2O = 1-hexadecanoyl-sn-glycero-3-phosphocholine + (9Z)-octadecenoate + H(+). It carries out the reaction 1-hexadecanoyl-2-(5Z,8Z,11Z,14Z-eicosatetraenoyl)-sn-glycero-3-phosphocholine + H2O = 1-hexadecanoyl-sn-glycero-3-phosphocholine + (5Z,8Z,11Z,14Z)-eicosatetraenoate + H(+). It catalyses the reaction 1-hexadecanoyl-2-(9Z-octadecenoyl)-sn-glycero-3-phospho-(1'-sn-glycerol) + H2O = 1-hexadecanoyl-sn-glycero-3-phospho-(1'-sn-glycerol) + (9Z)-octadecenoate + H(+). The enzyme catalyses N-hexadecanoyl-1,2-di-(9Z-octadecenoyl)-sn-glycero-3-phosphoethanolamine + H2O = N-hexadecanoyl-1-(9Z-octadecenoyl)-sn-glycero-3-phosphoethanolamine + (9Z)-octadecenoate + H(+). The catalysed reaction is 1-hexadecanoyl-2-(9Z,12Z-octadecadienoyl)-sn-glycero-3-phosphoethanolamine + H2O = 1-hexadecanoyl-sn-glycero-3-phosphoethanolamine + (9Z,12Z)-octadecadienoate + H(+). It carries out the reaction N,1-dihexadecanoyl-2-(9Z,12Z-octadecadienoyl)-sn-glycero-3-phosphoethanolamine + H2O = N,1-dihexadecanoyl-sn-glycero-3-phosphoethanolamine + (9Z,12Z)-octadecadienoate + H(+). Secretory calcium-dependent phospholipase A2 that primarily targets dietary phospholipids in the intestinal tract. Hydrolyzes the ester bond of the fatty acyl group attached at sn-2 position of phospholipids (phospholipase A2 activity) with preference for phosphatidylethanolamines and phosphatidylglycerols over phosphatidylcholines. May play a role in the biosynthesis of N-acyl ethanolamines that regulate energy metabolism and inflammation in the intestinal tract. Hydrolyzes N-acyl phosphatidylethanolamines to N-acyl lysophosphatidylethanolamines, which are further cleaved by a lysophospholipase D to release N-acyl ethanolamines. May act in an autocrine and paracrine manner. Has anti-helminth activity in a process regulated by gut microbiota. Upon helminth infection of intestinal epithelia, directly affects phosphatidylethanolamine contents in the membrane of helminth larvae, likely controlling an array of phospholipid-mediated cellular processes such as membrane fusion and cell division while providing for better immune recognition, ultimately reducing larvae integrity and infectivity. This chain is Phospholipase A2 (PLA2G1B), found in Bos taurus (Bovine).